A 213-amino-acid polypeptide reads, in one-letter code: MITLALSKGRIFEETMPLLAAAGIEVTEDPEKSRKLILATTRPDVRVVLVRASDVPTYVQYGGADLGVTGLDVLLENGNQGMYQPLDLRIAACRLSVAVRADYDYASAVKQGSRLRVATKYVGLAREFFASKGVHVDLIKLYGSMELAPLTGLADAIVDLVSTGNTLKANHLVEVERIMDISARLVVNQAALKLKREPIRRIIDAFASAIPTA.

Belongs to the ATP phosphoribosyltransferase family. Short subfamily. As to quaternary structure, heteromultimer composed of HisG and HisZ subunits.

It localises to the cytoplasm. It catalyses the reaction 1-(5-phospho-beta-D-ribosyl)-ATP + diphosphate = 5-phospho-alpha-D-ribose 1-diphosphate + ATP. It functions in the pathway amino-acid biosynthesis; L-histidine biosynthesis; L-histidine from 5-phospho-alpha-D-ribose 1-diphosphate: step 1/9. Functionally, catalyzes the condensation of ATP and 5-phosphoribose 1-diphosphate to form N'-(5'-phosphoribosyl)-ATP (PR-ATP). Has a crucial role in the pathway because the rate of histidine biosynthesis seems to be controlled primarily by regulation of HisG enzymatic activity. The protein is ATP phosphoribosyltransferase of Variovorax paradoxus (strain S110).